A 289-amino-acid chain; its full sequence is Rhodopsin (289 aa).

The Extracellular portion of the chain corresponds to 1 to 7 (YLVNPAG). A helical membrane pass occupies residues 8 to 32 (YAALGAYMFLLILIGFPVNFLTLYV). Residues 33 to 44 (TLEHKKLRTPLN) are Cytoplasmic-facing. A helical membrane pass occupies residues 45 to 67 (YILLNLAVADLFMVLGGFTTTMY). Topologically, residues 68-81 (TSMHGYFVLGRLGC) are extracellular. A disulfide bond links Cys-81 and Cys-158. Residues 82–104 (NLEGFFATLGGEIALWSLVVLAI) form a helical membrane-spanning segment. The short motif at 105–107 (ERW) is the 'Ionic lock' involved in activated form stabilization element. The Cytoplasmic portion of the chain corresponds to 105 to 123 (ERWIVGLKPIRNFRFTEDH). The helical transmembrane segment at 124-144 (AIMGLAFSWVMALSCAVPPLA) threads the bilayer. At 145–173 (GWLRYIPEGIQGSCGVDYYTRAEGFNNES) the chain is on the extracellular side. Asn-171 carries N-linked (GlcNAc...) asparagine glycosylation. The chain crosses the membrane as a helical span at residues 174 to 195 (FVIYMFTVHFLIPLSVIFFCYG). Over 196–223 (RLLCAVKEAAAAQQESETTQRAEKEVSR) the chain is Cytoplasmic. The chain crosses the membrane as a helical span at residues 224–245 (MVVIMVIGFLVCWLPYASVAWW). The Extracellular portion of the chain corresponds to 246–257 (IFCNQGSDFGPI). The helical transmembrane segment at 258–279 (FMTLPSFFAKRPAIYNPMIYIC) threads the bilayer. Lys-267 bears the N6-(retinylidene)lysine mark. Residues 280-289 (MNKQFRHCMI) lie on the Cytoplasmic side of the membrane.

Belongs to the G-protein coupled receptor 1 family. Opsin subfamily. In terms of processing, phosphorylated on some or all of the serine and threonine residues present in the C-terminal region. Post-translationally, contains one covalently linked retinal chromophore.

The protein resides in the membrane. It localises to the cell projection. Its subcellular location is the cilium. It is found in the photoreceptor outer segment. In terms of biological role, photoreceptor required for image-forming vision at low light intensity. While most salt water fish species use retinal as chromophore, most freshwater fish use 3-dehydroretinal, or a mixture of retinal and 3-dehydroretinal. Light-induced isomerization of 11-cis to all-trans retinal triggers a conformational change that activates signaling via G-proteins. Subsequent receptor phosphorylation mediates displacement of the bound G-protein alpha subunit by arrestin and terminates signaling. The chain is Rhodopsin (rho) from Limnocottus pallidus (Ray-finned fish).